The primary structure comprises 488 residues: Glutamyl-tRNA(Gln) amidotransferase subunit A (488 aa).

Residues lysine 77 and serine 152 each act as charge relay system in the active site. Serine 176 functions as the Acyl-ester intermediate in the catalytic mechanism.

Belongs to the amidase family. GatA subfamily. Heterotrimer of A, B and C subunits.

The enzyme catalyses L-glutamyl-tRNA(Gln) + L-glutamine + ATP + H2O = L-glutaminyl-tRNA(Gln) + L-glutamate + ADP + phosphate + H(+). In terms of biological role, allows the formation of correctly charged Gln-tRNA(Gln) through the transamidation of misacylated Glu-tRNA(Gln) in organisms which lack glutaminyl-tRNA synthetase. The reaction takes place in the presence of glutamine and ATP through an activated gamma-phospho-Glu-tRNA(Gln). This is Glutamyl-tRNA(Gln) amidotransferase subunit A from Streptococcus pneumoniae serotype 19F (strain G54).